The chain runs to 247 residues: Leucyl/phenylalanyl-tRNA--protein transferase (247 aa).

Belongs to the L/F-transferase family.

Its subcellular location is the cytoplasm. It carries out the reaction N-terminal L-lysyl-[protein] + L-leucyl-tRNA(Leu) = N-terminal L-leucyl-L-lysyl-[protein] + tRNA(Leu) + H(+). The enzyme catalyses N-terminal L-arginyl-[protein] + L-leucyl-tRNA(Leu) = N-terminal L-leucyl-L-arginyl-[protein] + tRNA(Leu) + H(+). It catalyses the reaction L-phenylalanyl-tRNA(Phe) + an N-terminal L-alpha-aminoacyl-[protein] = an N-terminal L-phenylalanyl-L-alpha-aminoacyl-[protein] + tRNA(Phe). Functions in the N-end rule pathway of protein degradation where it conjugates Leu, Phe and, less efficiently, Met from aminoacyl-tRNAs to the N-termini of proteins containing an N-terminal arginine or lysine. This chain is Leucyl/phenylalanyl-tRNA--protein transferase, found in Solidesulfovibrio magneticus (strain ATCC 700980 / DSM 13731 / RS-1) (Desulfovibrio magneticus).